The chain runs to 127 residues: UPF0102 protein Reut_A3265 (127 aa).

The protein belongs to the UPF0102 family.

This Cupriavidus pinatubonensis (strain JMP 134 / LMG 1197) (Cupriavidus necator (strain JMP 134)) protein is UPF0102 protein Reut_A3265.